A 180-amino-acid polypeptide reads, in one-letter code: Peptide deformylase (180 aa).

2 residues coordinate Fe cation: C96 and H138. E139 is a catalytic residue. H142 lines the Fe cation pocket.

Belongs to the polypeptide deformylase family. Requires Fe(2+) as cofactor.

It catalyses the reaction N-terminal N-formyl-L-methionyl-[peptide] + H2O = N-terminal L-methionyl-[peptide] + formate. Removes the formyl group from the N-terminal Met of newly synthesized proteins. Requires at least a dipeptide for an efficient rate of reaction. N-terminal L-methionine is a prerequisite for activity but the enzyme has broad specificity at other positions. The sequence is that of Peptide deformylase from Rhodopseudomonas palustris (strain BisA53).